The following is a 398-amino-acid chain: UPF0496 protein At5g66660 (398 aa).

2 helical membrane passes run 240 to 260 (VFFA…TTMS) and 263 to 283 (PVVC…GKWF).

This sequence belongs to the UPF0496 family.

The protein resides in the membrane. The sequence is that of UPF0496 protein At5g66660 from Arabidopsis thaliana (Mouse-ear cress).